Here is a 933-residue protein sequence, read N- to C-terminus: Neuronal PAS domain-containing protein 4A (933 aa).

Residues 1 to 13 (MYRSTKGASKARR) form a basic motif; degenerate region. Residues 1–53 (MYRSTKGASKARRDQINAEIRNLKDLLPISDADKSRLSYLHIMSLACMYTRKS) form the bHLH domain. Residues 14–53 (DQINAEIRNLKDLLPISDADKSRLSYLHIMSLACMYTRKS) form a helix-loop-helix motif region. PAS domains lie at 74–148 (SFYE…PDTD) and 220–290 (TSAS…LREG). In terms of domain architecture, PAC spans 295–334 (AEMVVRVETADHSWVWLYMVLQLETGETPIVSNNYIISET). Residues 361–398 (QESVSLQSPETLSSPDQVFTPGSSGLSGQSFDFSTAAC) are compositionally biased toward polar residues. Disordered regions lie at residues 361 to 451 (QESV…ASSP), 514 to 573 (GSNF…LSSL), and 750 to 776 (DLSS…PSTP). Low complexity-rich tracts occupy residues 399-411 (STGS…GSSS), 440-451 (EPMASPSSASSP), 538-560 (GQTA…SNPQ), and 751-769 (LSSS…HSSP).

In terms of assembly, efficient DNA binding requires dimerization with another bHLH protein. Brain-specific.

The protein localises to the nucleus. In terms of biological role, transcription factor expressed in neurons of the brain that regulates the excitatory-inhibitory balance within neural circuits and is required for contextual memory in the hippocampus. Plays a key role in the structural and functional plasticity of neurons. Acts as an early-response transcription factor in both excitatory and inhibitory neurons, where it induces distinct but overlapping sets of late-response genes in these two types of neurons, allowing the synapses that form on inhibitory and excitatory neurons to be modified by neuronal activity in a manner specific to their function within a circuit, thereby facilitating appropriate circuit responses to sensory experience. The sequence is that of Neuronal PAS domain-containing protein 4A (npas4a) from Danio rerio (Zebrafish).